Here is a 739-residue protein sequence, read N- to C-terminus: MSLMLEPNPTQIKEERIYAEMGLTDEEFAMVEKILGRLPNYTETGLFSVMWSEHCSYKNSKPVLRKFPTTGERVLQGPGEGAGIVDIGDNQAVVFKMESHNHPSAIEPYQGAATGVGGIIRDVFSMGARPVALLNSLRFGELQSPRVKYLFEEVVAGIAGYGNCIGIPTVGGEVQFDPCYEGNPLVNAMCVGLINHEDIKKGQAHGAGNTVMYVGASTGRDGIHGATFASEELSESSEAKRPAVQVGDPFMEKLLIEACLELIQSDALVGIQDMGAAGLTSSSAEMASKAGMGIEMYLDDVPQRETGMTPYEMMLSESQERMLIVVKKGREQEIVDLFEKYGLAAVTMGKVTEDKMLRLFHKDEMVAEVPADALAEEAPIYHKPSKEAAYFAEFQQMKMETPKVEDYKETLLALLQQPTIASKEWVYDQYDYQVRTSTIVTPGSDAAVIRVRGTEKGLAMTTDCNSRYIYLDPEVGGKIAVAEAARNIVCSGGEPLAITDCLNFGNPEKPEIFWQIEKSVDGMSEACRKLQTPVIGGNVSMYNERSGEAVYPTPTVGMVGLVHDLKHVTTQEFKQAGDLVYVIGETKAEFGGSELQKMIYGKIFGQSPSIDLDVELKRQKQVLAAIQAGLVQSAHDVAEGGLAVAITESAIGAKGLGATVKLDGEATAVLFAESQSRFVITVKRENKEAFEKAVEAIQVGEVTNTNEVTIHNEENEVLLTANVDEMRKAWKGAIPCLLK.

Residue H54 is part of the active site. Positions 57 and 96 each coordinate ATP. E98 serves as a coordination point for Mg(2+). Substrate is bound by residues 99–102 (SHNH) and R121. Catalysis depends on H100, which acts as the Proton acceptor. D122 contacts Mg(2+). Q245 lines the substrate pocket. Residue D273 coordinates Mg(2+). 317 to 319 (ESQ) contacts substrate. ATP is bound by residues D500 and G537. N538 serves as a coordination point for Mg(2+). S540 contacts substrate.

The protein belongs to the FGAMS family. Monomer. Part of the FGAM synthase complex composed of 1 PurL, 1 PurQ and 2 PurS subunits.

It localises to the cytoplasm. The catalysed reaction is N(2)-formyl-N(1)-(5-phospho-beta-D-ribosyl)glycinamide + L-glutamine + ATP + H2O = 2-formamido-N(1)-(5-O-phospho-beta-D-ribosyl)acetamidine + L-glutamate + ADP + phosphate + H(+). It functions in the pathway purine metabolism; IMP biosynthesis via de novo pathway; 5-amino-1-(5-phospho-D-ribosyl)imidazole from N(2)-formyl-N(1)-(5-phospho-D-ribosyl)glycinamide: step 1/2. In terms of biological role, part of the phosphoribosylformylglycinamidine synthase complex involved in the purines biosynthetic pathway. Catalyzes the ATP-dependent conversion of formylglycinamide ribonucleotide (FGAR) and glutamine to yield formylglycinamidine ribonucleotide (FGAM) and glutamate. The FGAM synthase complex is composed of three subunits. PurQ produces an ammonia molecule by converting glutamine to glutamate. PurL transfers the ammonia molecule to FGAR to form FGAM in an ATP-dependent manner. PurS interacts with PurQ and PurL and is thought to assist in the transfer of the ammonia molecule from PurQ to PurL. In Bacillus mycoides (strain KBAB4) (Bacillus weihenstephanensis), this protein is Phosphoribosylformylglycinamidine synthase subunit PurL.